Consider the following 303-residue polypeptide: Porphobilinogen deaminase (303 aa).

An S-(dipyrrolylmethanemethyl)cysteine modification is found at Cys240.

This sequence belongs to the HMBS family. As to quaternary structure, monomer. Requires dipyrromethane as cofactor.

The catalysed reaction is 4 porphobilinogen + H2O = hydroxymethylbilane + 4 NH4(+). It participates in porphyrin-containing compound metabolism; protoporphyrin-IX biosynthesis; coproporphyrinogen-III from 5-aminolevulinate: step 2/4. In terms of biological role, tetrapolymerization of the monopyrrole PBG into the hydroxymethylbilane pre-uroporphyrinogen in several discrete steps. This is Porphobilinogen deaminase from Stenotrophomonas maltophilia (strain R551-3).